A 165-amino-acid chain; its full sequence is Large ribosomal subunit protein bL17 (165 aa).

A compositionally biased stretch (basic and acidic residues) spans 138 to 158; that stretch reads QEKREAQEKAREEKRTARKSD. The segment at 138-165 is disordered; the sequence is QEKREAQEKAREEKRTARKSDSVPARKK.

Belongs to the bacterial ribosomal protein bL17 family. Part of the 50S ribosomal subunit. Contacts protein L32.

The chain is Large ribosomal subunit protein bL17 from Leptospira borgpetersenii serovar Hardjo-bovis (strain JB197).